The following is a 767-amino-acid chain: Pre-mRNA-splicing factor ATP-dependent RNA helicase PRP43 (767 aa).

Positions M1–F74 are disordered. 2 positions are modified to phosphoserine: S8 and S9. Positions T58 to K70 are enriched in basic and acidic residues. The 166-residue stretch at L103–P268 folds into the Helicase ATP-binding domain. G116 to T123 is an ATP binding site. A DEAH box motif is present at residues D215–H218. The Helicase C-terminal domain maps to T293–G473.

Belongs to the DEAD box helicase family. DEAH subfamily. DDX15/PRP43 sub-subfamily. Component of the NTR complex (NTC-related complex), composed of NTR1, NTR2 and PRP43. Interacts with NTR1 and NTR2. Interacts with SPP382.

It localises to the nucleus. The enzyme catalyses ATP + H2O = ADP + phosphate + H(+). Functionally, pre-mRNA processing factor involved in disassembly of spliceosomes after the release of mature mRNA. This Saccharomyces cerevisiae (strain ATCC 204508 / S288c) (Baker's yeast) protein is Pre-mRNA-splicing factor ATP-dependent RNA helicase PRP43 (PRP43).